A 230-amino-acid polypeptide reads, in one-letter code: Sugar fermentation stimulation protein homolog (230 aa).

The protein belongs to the SfsA family.

This is Sugar fermentation stimulation protein homolog from Clostridium botulinum (strain ATCC 19397 / Type A).